The following is a 603-amino-acid chain: Nuclear receptor subfamily 2 group C member 1 (603 aa).

Residues methionine 1 to methionine 178 form a required for interaction with KAT2B region. Positions phenylalanine 110–cysteine 185 form a DNA-binding region, nuclear receptor. NR C4-type zinc fingers lie at residues cysteine 113–cysteine 133 and cysteine 149–cysteine 168. Phosphoserine occurs at positions 197 and 215. At threonine 220 the chain carries Phosphothreonine. Threonine 222 is modified (phosphothreonine; by MAPK1). A Glycyl lysine isopeptide (Lys-Gly) (interchain with G-Cter in SUMO); alternate cross-link involves residue lysine 250. Lysine 250 is covalently cross-linked (Glycyl lysine isopeptide (Lys-Gly) (interchain with G-Cter in SUMO2); alternate). The 243-residue stretch at glycine 348–glutamate 590 folds into the NR LBD domain. Position 581 is a phosphoserine; by PKC (serine 581). Positions proline 584 to isoleucine 603 are required for interaction with NRIP1. A Glycyl lysine isopeptide (Lys-Gly) (interchain with G-Cter in SUMO2) cross-link involves residue lysine 588.

Belongs to the nuclear hormone receptor family. NR2 subfamily. As to quaternary structure, homodimer. Heterodimer; binds DNA as a heterodimer with NR2C2 required for chromatin remodeling and for binding to promoter regions such as globin DR1 repeats. Interacts with ESR1; the interaction prevents homodimerization of ESR1 and suppresses its transcriptional activity and cell growth. Interacts with NRIP1 (via its LXXLL motifs); the interaction provides corepressor activity. Interacts with HDAC3 (via the DNA-binding domain). Interacts with HDAC4 (via the DNA-binding domain). Interacts with PIAS1; the interaction is required for sumoylation of NR2C1. Interacts with UBE2I; the interaction is required for sumoylation of NR2C1. Interacts with KAT2B; the interaction acts as a corepressor of gene expression. In terms of processing, sumoylation requires both PIAS1 and UBE2I. Sumoylation appears to dissociate NR2C1 from the PML nuclear bodies. Enhances the interaction with NRIP1 but inhibits interaction with KAT2B. In proliferating cells, stimulation by all-trans retinoic acid, activation of MAPK1-mediated phosphorylation and recruitment to PML bodies with subsequent sumoylation, suppresses OCT4 expression. Phosphorylated on several serine and threonine residues. Phosphorylation on Thr-220, stimulated by all-trans retinoic acid (atRA) mediates PML location and sumoylation in proliferating cells which then modulates its association with effector molecules, KAT2B and NRIP1. Phosphorylation on Ser-581 by PKC is important for protein stability and function as activator of RARB.

It localises to the nucleus. The protein localises to the PML body. Its function is as follows. Orphan nuclear receptor. Binds the IR7 element in the promoter of its own gene in an autoregulatory negative feedback mechanism. Primarily repressor of a broad range of genes. Binds to hormone response elements (HREs) consisting of two 5'-AGGTCA-3' half site direct repeat consensus sequences. Together with NR2C2, forms the core of the DRED (direct repeat erythroid-definitive) complex that represses embryonic and fetal globin transcription. Also activator of OCT4 gene expression. May be involved in stem cell proliferation and differentiation. Mediator of retinoic acid-regulated preadipocyte proliferation. The sequence is that of Nuclear receptor subfamily 2 group C member 1 (NR2C1) from Macaca fascicularis (Crab-eating macaque).